We begin with the raw amino-acid sequence, 114 residues long: Beta-microseminoprotein (114 aa).

An N-terminal signal peptide occupies residues 1-20 (MNVLLGSVVIFATFVTLCNA). Disulfide bonds link cysteine 22-cysteine 70, cysteine 38-cysteine 62, cysteine 57-cysteine 93, cysteine 60-cysteine 69, and cysteine 84-cysteine 107.

This sequence belongs to the beta-microseminoprotein family. As to quaternary structure, homodimer; Interacts with PI16. As to expression, strongly expressed in prostate, liver, kidney, breast and penis. Also expressed in pancreas, esophagus, stomach, deodenum, colon, trachea, lung, salivary glands and fallopian tube. PSP94 is expressed in lung and breast, whereas PSP57 is found in kidney and bladder.

Its subcellular location is the secreted. The protein is Beta-microseminoprotein (MSMB) of Homo sapiens (Human).